A 350-amino-acid polypeptide reads, in one-letter code: Phenylalanine--tRNA ligase alpha subunit (350 aa).

Glutamate 260 provides a ligand contact to Mg(2+).

It belongs to the class-II aminoacyl-tRNA synthetase family. Phe-tRNA synthetase alpha subunit type 1 subfamily. Tetramer of two alpha and two beta subunits. Mg(2+) is required as a cofactor.

The protein resides in the cytoplasm. It catalyses the reaction tRNA(Phe) + L-phenylalanine + ATP = L-phenylalanyl-tRNA(Phe) + AMP + diphosphate + H(+). In Mycoplasma capricolum subsp. capricolum (strain California kid / ATCC 27343 / NCTC 10154), this protein is Phenylalanine--tRNA ligase alpha subunit.